The primary structure comprises 36 residues: U-limacoditoxin(7)-Dv63 (36 aa).

The N-terminal stretch at 1–19 is a signal peptide; it reads MFKPRVILLITIIAVFSEF.

It belongs to the limacoditoxin-7 family. In terms of tissue distribution, expressed by the venom secretory cell of the spine. The spine is a cuticular structure containing a single large nucleated venom-secreting cell at its base. It is an independent unit capable of producing, storing and injecting venom. On the back of D.vulnerans caterpillars, spines are grouped together by 50 to 100 to form scoli, of which there are eight in D.vulnerans.

It is found in the secreted. Functionally, peptide with insecticidal and antiparasitic activities. Induces irreversible paralysis in D.melanogaster when tested at high doses. It shows a moderate antiparasitic activity against the major pathogenic nematode of ruminants (H.contortus, EC(50)=41.3 uM). Does not show antimicrobial activities. Does not induce increase in intracellular calcium in mouse DRG neurons, suggesting that it does not induce pain. This is U-limacoditoxin(7)-Dv63 from Doratifera vulnerans (Mottled cup moth).